The chain runs to 336 residues: Atypical chemokine receptor 1 (336 aa).

The Extracellular segment spans residues 1 to 63 (MGNCLHQAEL…CNLLDDSSLP (63 aa)). N-linked (GlcNAc...) asparagine glycosylation is found at Asn16 and Asn33. Disulfide bonds link Cys51–Cys276 and Cys129–Cys195. Residues 64–84 (FFILASVLGILASSTVLFMLF) form a helical membrane-spanning segment. The Cytoplasmic segment spans residues 85-95 (RPLFRWQLCPG). A helical transmembrane segment spans residues 96–116 (WPVLAQLAVGSALFSIVVPIL). Residues 117–129 (APGLGNTRSSALC) lie on the Extracellular side of the membrane. Residues 130–153 (SLGYCVWYGSAFAQALLLGCHASL) form a helical membrane-spanning segment. The Cytoplasmic segment spans residues 154 to 166 (GPKLGAGQVPGLT). Residues 167–187 (LGLTVGLWGAAALLTVPITLA) form a helical membrane-spanning segment. At 188–207 (SGASDGLCTPIYSTELKALQ) the chain is on the extracellular side. A helical transmembrane segment spans residues 208–228 (ATHTVACFAIFVLLPLGLFGA). At 229–244 (KGVKKALGMGPGPWMT) the chain is on the cytoplasmic side. The chain crosses the membrane as a helical span at residues 245–265 (ILWIWFIFWWPHGVVLGLDFL). Over 266 to 287 (VRSKLLLLPTCLAQQVLDLLLN) the chain is Extracellular. Residues 288–308 (LAEALTIVHCVATPLLLALFC) form a helical membrane-spanning segment. The Cytoplasmic portion of the chain corresponds to 309 to 336 (HQATRTLLPSLPLPERWSSPVDTLGSKS).

Belongs to the G-protein coupled receptor 1 family. Atypical chemokine receptor subfamily.

It is found in the early endosome. The protein resides in the recycling endosome. Its subcellular location is the membrane. In terms of biological role, atypical chemokine receptor that controls chemokine levels and localization via high-affinity chemokine binding that is uncoupled from classic ligand-driven signal transduction cascades, resulting instead in chemokine sequestration, degradation, or transcytosis. Also known as interceptor (internalizing receptor) or chemokine-scavenging receptor or chemokine decoy receptor. Has a promiscuous chemokine-binding profile, interacting with inflammatory chemokines of both the CXC and the CC subfamilies but not with homeostatic chemokines. Acts as a receptor for chemokines including CCL2, CCL5, CCL7, CCL11, CCL13, CCL14, CCL17, CXCL5, CXCL6, IL8/CXCL8, CXCL11, GRO, RANTES, MCP-1 and TARC. May regulate chemokine bioavailability and, consequently, leukocyte recruitment through two distinct mechanisms: when expressed in endothelial cells, it sustains the abluminal to luminal transcytosis of tissue-derived chemokines and their subsequent presentation to circulating leukocytes; when expressed in erythrocytes, serves as blood reservoir of cognate chemokines but also as a chemokine sink, buffering potential surges in plasma chemokine levels. The sequence is that of Atypical chemokine receptor 1 (ACKR1) from Sapajus apella (Brown-capped capuchin).